Here is a 326-residue protein sequence, read N- to C-terminus: Transcription cofactor vestigial-like protein 3 (326 aa).

Residues 54–82 form a disordered region; that stretch reads SLEVTLPSKQEEEEEEEEDEEEEEKDQPA. Lys62 is covalently cross-linked (Glycyl lysine isopeptide (Lys-Gly) (interchain with G-Cter in SUMO2)). The segment covering 64–78 has biased composition (acidic residues); the sequence is EEEEEEEEDEEEEEK. Residue Lys129 forms a Glycyl lysine isopeptide (Lys-Gly) (interchain with G-Cter in SUMO2) linkage. The segment at 184–208 is disordered; that stretch reads TADPNSWPGHGLHQTGPAPPPTASE.

This sequence belongs to the vestigial family.

The protein localises to the nucleus. Functionally, may act as a specific coactivator for the mammalian TEFs. The chain is Transcription cofactor vestigial-like protein 3 from Mus musculus (Mouse).